Reading from the N-terminus, the 654-residue chain is tRNA 5-methylaminomethyl-2-thiouridine biosynthesis bifunctional protein MnmC (654 aa).

The tract at residues Met-1–Gln-235 is tRNA (mnm(5)s(2)U34)-methyltransferase. The interval Val-261–Gly-654 is FAD-dependent cmnm(5)s(2)U34 oxidoreductase.

In the N-terminal section; belongs to the methyltransferase superfamily. tRNA (mnm(5)s(2)U34)-methyltransferase family. This sequence in the C-terminal section; belongs to the DAO family. It depends on FAD as a cofactor.

The protein resides in the cytoplasm. It carries out the reaction 5-aminomethyl-2-thiouridine(34) in tRNA + S-adenosyl-L-methionine = 5-methylaminomethyl-2-thiouridine(34) in tRNA + S-adenosyl-L-homocysteine + H(+). In terms of biological role, catalyzes the last two steps in the biosynthesis of 5-methylaminomethyl-2-thiouridine (mnm(5)s(2)U) at the wobble position (U34) in tRNA. Catalyzes the FAD-dependent demodification of cmnm(5)s(2)U34 to nm(5)s(2)U34, followed by the transfer of a methyl group from S-adenosyl-L-methionine to nm(5)s(2)U34, to form mnm(5)s(2)U34. This chain is tRNA 5-methylaminomethyl-2-thiouridine biosynthesis bifunctional protein MnmC, found in Pseudomonas paraeruginosa (strain DSM 24068 / PA7) (Pseudomonas aeruginosa (strain PA7)).